The following is a 92-amino-acid chain: Small ribosomal subunit protein uS19 (92 aa).

It belongs to the universal ribosomal protein uS19 family.

Protein S19 forms a complex with S13 that binds strongly to the 16S ribosomal RNA. This chain is Small ribosomal subunit protein uS19, found in Staphylococcus carnosus (strain TM300).